The primary structure comprises 198 residues: MQTVARKASVERVTNETTIALTLTIEGEGNVRVTTGFGMLDHMLTLTAFWAGFDLDLTCNGDMHIDAHHTAEDVALCLGQALATALDDRKGIARVGFARVPMDEALAEVTLDISGRPWLEWRGDEYLPPVIAGEEKDLWREFHKAFASAARMNLHVSYLYGKNGHHLLESASKGLGLALRQAVRRDRQTVLSTKGSLD.

It belongs to the imidazoleglycerol-phosphate dehydratase family.

The protein resides in the cytoplasm. It carries out the reaction D-erythro-1-(imidazol-4-yl)glycerol 3-phosphate = 3-(imidazol-4-yl)-2-oxopropyl phosphate + H2O. It participates in amino-acid biosynthesis; L-histidine biosynthesis; L-histidine from 5-phospho-alpha-D-ribose 1-diphosphate: step 6/9. This chain is Imidazoleglycerol-phosphate dehydratase, found in Nitratidesulfovibrio vulgaris (strain DP4) (Desulfovibrio vulgaris).